Reading from the N-terminus, the 274-residue chain is Large ribosomal subunit protein uL2 (274 aa).

Disordered regions lie at residues 37–60 (QHQK…GHKH) and 224–252 (AMNP…WGNL). The span at 50-60 (TTRHKGGGHKH) shows a compositional bias: basic residues. The span at 229-246 (DHPHGGGEGRTGEGRHAV) shows a compositional bias: basic and acidic residues.

Belongs to the universal ribosomal protein uL2 family. As to quaternary structure, part of the 50S ribosomal subunit. Forms a bridge to the 30S subunit in the 70S ribosome.

In terms of biological role, one of the primary rRNA binding proteins. Required for association of the 30S and 50S subunits to form the 70S ribosome, for tRNA binding and peptide bond formation. It has been suggested to have peptidyltransferase activity; this is somewhat controversial. Makes several contacts with the 16S rRNA in the 70S ribosome. In Paracidovorax citrulli (strain AAC00-1) (Acidovorax citrulli), this protein is Large ribosomal subunit protein uL2.